A 534-amino-acid polypeptide reads, in one-letter code: Cytokine-like nuclear factor N-PAC (534 aa).

One can recognise a PWWP domain in the interval 8 to 66 (QGDLVWGKLGRYPPWPGKIVNPPKDLKKPRGKKCLFVKFFGTEDHAWIKVEQLKPYHAH). 2 stretches are compositionally biased toward basic and acidic residues: residues 93–122 (AKAK…QTGE) and 138–157 (RSRD…DKDS). The tract at residues 93 to 168 (AKAKEHAKEH…SPQPSSLKKL (76 aa)) is disordered. The segment at residues 144–156 (PRKRGRPPKDDKD) is a DNA-binding region (a.T hook). An interaction with histone H3 region spans residues 190 to 193 (DSWL). Residues 242–534 (GNIIPTDKKI…MSAVYRAYIH (293 aa)) form a dehydrogenase domain region. Residues 252-266 (GFLG…IVSN), Thr-343, and Lys-486 each bind NAD(+).

Belongs to the HIBADH-related family. NP60 subfamily. As to quaternary structure, homotetramere. Binds to mononucleosomes.

The protein localises to the nucleus. Its subcellular location is the chromosome. Cytokine-like nuclear factor with chromatin gene reader activity involved in chromatin modification and regulation of gene expression. Acts as a nucleosome-destabilizing factor that is recruited to genes during transcriptional activation. Recognizes and binds histone H3 without a preference for specific epigenetic markers and also binds DNA. Interacts with KDM1B and promotes its histone demethylase activity by facilitating the capture of H3 tails, they form a multifunctional enzyme complex that modifies transcribed chromatin and facilitates Pol II transcription through nucleosomes. The protein is Cytokine-like nuclear factor N-PAC (glyr1) of Xenopus tropicalis (Western clawed frog).